A 383-amino-acid polypeptide reads, in one-letter code: Galactokinase (383 aa).

34–37 provides a ligand contact to substrate; that stretch reads EHTD. 124-130 contacts ATP; the sequence is GAGLSSS. S130 and E162 together coordinate Mg(2+). The Proton acceptor role is filled by D174. Y223 lines the substrate pocket.

The protein belongs to the GHMP kinase family. GalK subfamily.

The protein resides in the cytoplasm. The enzyme catalyses alpha-D-galactose + ATP = alpha-D-galactose 1-phosphate + ADP + H(+). It functions in the pathway carbohydrate metabolism; galactose metabolism. Catalyzes the transfer of the gamma-phosphate of ATP to D-galactose to form alpha-D-galactose-1-phosphate (Gal-1-P). This Yersinia pseudotuberculosis serotype O:1b (strain IP 31758) protein is Galactokinase.